A 188-amino-acid polypeptide reads, in one-letter code: dCTP deaminase (188 aa).

109–114 (KSTYAR) provides a ligand contact to dCTP. E135 functions as the Proton donor/acceptor in the catalytic mechanism. Residues Q154, Y168, and Q178 each coordinate dCTP.

This sequence belongs to the dCTP deaminase family. Homotrimer.

The enzyme catalyses dCTP + H2O + H(+) = dUTP + NH4(+). Its pathway is pyrimidine metabolism; dUMP biosynthesis; dUMP from dCTP (dUTP route): step 1/2. Its function is as follows. Catalyzes the deamination of dCTP to dUTP. The protein is dCTP deaminase of Helicobacter hepaticus (strain ATCC 51449 / 3B1).